The chain runs to 112 residues: MAAALARLGLRPVKQVRVQFCPFEKNVESTRTFLQAVSSEKVRSTNLNCPVIADVRHDGSEPCVDVLFGDGYRLIMRGAHLTALEMLTAFASHIRARDAAGSGDKPGADTGR.

The protein belongs to the mitochondrion-specific ribosomal protein mL53 family. Component of the mitochondrial ribosome large subunit (39S) which comprises a 16S rRNA and about 50 distinct proteins.

It localises to the mitochondrion. The polypeptide is Large ribosomal subunit protein mL53 (MRPL53) (Pongo abelii (Sumatran orangutan)).